Consider the following 1116-residue polypeptide: cGMP-specific 3',5'-cyclic phosphodiesterase (1116 aa).

2 disordered regions span residues 1 to 36 and 82 to 136; these read MTDV…NGAA and KSEC…ATQQ. The span at 15–28 shows a compositional bias: low complexity; the sequence is VSSTSSEVAVETTS. The span at 86 to 136 shows a compositional bias: polar residues; the sequence is HSQSNNNQHVETAPSKQSSDSEASAPTTVSIPSANAKINSSSSGKTTATQQ. GAF domains follow at residues 241-393 and 425-611; these read DIDV…GIGI and NLEC…GLGI. Positions 641–964 constitute a PDEase domain; sequence SQDQTEKLAQ…RNWQDLAEKV (324 aa). H717 serves as the catalytic Proton donor. A divalent metal cation contacts are provided by H721, H757, D758, and D868. Disordered regions lie at residues 1005–1031 and 1067–1116; these read QHGG…LSIK and HVSE…CALL. Basic and acidic residues-rich tracts occupy residues 1014–1023 and 1067–1076; these read EDTHTPEHQR and HVSEDMDDKS. A compositionally biased stretch (low complexity) spans 1085 to 1103; it reads SGSVGRMSASSSTSSAGTV. Over residues 1106–1116 the composition is skewed to basic residues; it reads SKKRSKLCALL. Position 1113 is a cysteine methyl ester (C1113). C1113 carries the S-farnesyl cysteine lipid modification. A propeptide spans 1114–1116 (removed in mature form); it reads ALL.

Belongs to the cyclic nucleotide phosphodiesterase family. In terms of assembly, interacts with PrBP. It depends on a divalent metal cation as a cofactor.

The protein localises to the cell membrane. The catalysed reaction is 3',5'-cyclic GMP + H2O = GMP + H(+). In terms of biological role, has a role regulating cGMP transport in Malpighian tubule principal cells. In Drosophila mojavensis (Fruit fly), this protein is cGMP-specific 3',5'-cyclic phosphodiesterase.